We begin with the raw amino-acid sequence, 31 residues long: Ranatuerin-2 (31 aa).

A disulfide bridge links C23 with C28.

It belongs to the frog skin active peptide (FSAP) family. Ranatuerin subfamily. As to expression, expressed by the skin glands.

The protein localises to the secreted. Functionally, antibacterial activity against Gram-positive bacterium S.aureus (MIC=60 uM). Shows no detectable hemolytic activity towards human erythrocytes. This is Ranatuerin-2 from Aquarana catesbeiana (American bullfrog).